Reading from the N-terminus, the 530-residue chain is Cilia- and flagella-associated protein 97 (530 aa).

A Phosphoserine modification is found at S19. Disordered regions lie at residues 29-83 (TNSV…PVEN) and 116-258 (IPNR…LSTP). Residues 35–49 (KQNDDPKERIDKDTK) show a composition bias toward basic and acidic residues. Over residues 50–63 (NVNSNTGMQTTENY) the composition is skewed to polar residues. The span at 67 to 82 (KGNERNVKFPPEHPVE) shows a compositional bias: basic and acidic residues. The segment covering 129-139 (GDYYTDGEESS) has biased composition (acidic residues). Phosphothreonine is present on T133. Phosphoserine is present on residues S138 and S139. Over residues 170–203 (SSSSSSSLSSSSSGSGTDCLDGGSDSHLSDSSPS) the composition is skewed to low complexity. The residue at position 215 (S215) is a Phosphoserine. Residues 227–236 (TETQPSSTTP) show a composition bias toward polar residues. Residues S245 and S327 each carry the phosphoserine modification. The stretch at 372–447 (KNYSFTREEV…ALLKRLEAVK (76 aa)) forms a coiled coil. Disordered stretches follow at residues 395–417 (LSRQAEKPGSKSTIPRSADHPPK) and 483–530 (QYSP…TAWL). Residues 491–501 (SRTSSATSGLS) show a composition bias toward polar residues.

It belongs to the CFAP97 family.

This is Cilia- and flagella-associated protein 97 from Pongo abelii (Sumatran orangutan).